The sequence spans 254 residues: Aspartate/glutamate leucyltransferase (254 aa).

Belongs to the R-transferase family. Bpt subfamily.

The protein localises to the cytoplasm. It carries out the reaction N-terminal L-glutamyl-[protein] + L-leucyl-tRNA(Leu) = N-terminal L-leucyl-L-glutamyl-[protein] + tRNA(Leu) + H(+). The enzyme catalyses N-terminal L-aspartyl-[protein] + L-leucyl-tRNA(Leu) = N-terminal L-leucyl-L-aspartyl-[protein] + tRNA(Leu) + H(+). In terms of biological role, functions in the N-end rule pathway of protein degradation where it conjugates Leu from its aminoacyl-tRNA to the N-termini of proteins containing an N-terminal aspartate or glutamate. In Mesorhizobium japonicum (strain LMG 29417 / CECT 9101 / MAFF 303099) (Mesorhizobium loti (strain MAFF 303099)), this protein is Aspartate/glutamate leucyltransferase.